We begin with the raw amino-acid sequence, 155 residues long: Ribonuclease 8 (155 aa).

A signal peptide spans 1–28; that stretch reads MAPARAGCCPLLLLLLLGLWVAEIPVSA. 3 disulfide bridges follow: Cys-65–Cys-119, Cys-83–Cys-134, and Cys-90–Cys-97. Residues 66 to 70 and Lys-91 contribute to the substrate site; that span reads KDLNT. His-150 functions as the Proton donor in the catalytic mechanism.

It belongs to the pancreatic ribonuclease family.

The protein resides in the secreted. In terms of biological role, has a low ribonuclease activity. In Saguinus oedipus (Cotton-top tamarin), this protein is Ribonuclease 8 (RNASE8).